The chain runs to 276 residues: Ribosomal RNA small subunit methyltransferase A (276 aa).

6 residues coordinate S-adenosyl-L-methionine: Asn27, Leu29, Gly54, Glu75, Asp101, and Asn123.

It belongs to the class I-like SAM-binding methyltransferase superfamily. rRNA adenine N(6)-methyltransferase family. RsmA subfamily.

It localises to the cytoplasm. The enzyme catalyses adenosine(1518)/adenosine(1519) in 16S rRNA + 4 S-adenosyl-L-methionine = N(6)-dimethyladenosine(1518)/N(6)-dimethyladenosine(1519) in 16S rRNA + 4 S-adenosyl-L-homocysteine + 4 H(+). Functionally, specifically dimethylates two adjacent adenosines (A1518 and A1519) in the loop of a conserved hairpin near the 3'-end of 16S rRNA in the 30S particle. May play a critical role in biogenesis of 30S subunits. The polypeptide is Ribosomal RNA small subunit methyltransferase A (Bartonella tribocorum (strain CIP 105476 / IBS 506)).